The chain runs to 107 residues: MKLHFCSQAASSFPSPNPSNFLLPVASCLIPALKRLRTGYCPNITLGFSFQKLCIPDTSMCNFPSAPCTKPSERRCLLEFKARKGYKNRNGPKAEKRRPYVRAHAKW.

Positions 87 to 107 (KNRNGPKAEKRRPYVRAHAKW) are disordered.

This is an uncharacterized protein from Saccharomyces cerevisiae (strain ATCC 204508 / S288c) (Baker's yeast).